Reading from the N-terminus, the 358-residue chain is Peptide chain release factor 1 (358 aa).

At Gln233 the chain carries N5-methylglutamine.

It belongs to the prokaryotic/mitochondrial release factor family. In terms of processing, methylated by PrmC. Methylation increases the termination efficiency of RF1.

It localises to the cytoplasm. Its function is as follows. Peptide chain release factor 1 directs the termination of translation in response to the peptide chain termination codons UAG and UAA. In Clostridium botulinum (strain 657 / Type Ba4), this protein is Peptide chain release factor 1.